A 91-amino-acid polypeptide reads, in one-letter code: Mercuric transport protein periplasmic component (91 aa).

The first 19 residues, 1 to 19, serve as a signal peptide directing secretion; that stretch reads MKKLFAALALAAVVAPVWA. The HMA domain maps to 22–88; sequence QTVTLSVPGM…ATGDAGYPSS (67 aa). Residues C33 and C36 each contribute to the Hg(2+) site.

This sequence belongs to the MerP family. In terms of assembly, monomer.

It localises to the periplasm. Involved in mercury resistance. Acts as a mercury scavenger that specifically binds to a mercuric ion in the periplasm and probably passes it to the cytoplasmic mercuric reductase MerA via the mercuric transport protein MerT. This is Mercuric transport protein periplasmic component (merP) from Alcaligenes sp.